The chain runs to 793 residues: Phenylalanine--tRNA ligase beta subunit (793 aa).

Residues Ala-39–Arg-148 form the tRNA-binding domain. In terms of domain architecture, B5 spans Pro-400–Ile-476. Mg(2+)-binding residues include Asp-454, Asp-460, Glu-463, and Glu-464. Residues Ser-698–Arg-791 enclose the FDX-ACB domain.

The protein belongs to the phenylalanyl-tRNA synthetase beta subunit family. Type 1 subfamily. Tetramer of two alpha and two beta subunits. Requires Mg(2+) as cofactor.

The protein localises to the cytoplasm. It carries out the reaction tRNA(Phe) + L-phenylalanine + ATP = L-phenylalanyl-tRNA(Phe) + AMP + diphosphate + H(+). This Acinetobacter baylyi (strain ATCC 33305 / BD413 / ADP1) protein is Phenylalanine--tRNA ligase beta subunit.